Reading from the N-terminus, the 224-residue chain is Orotate phosphoribosyltransferase (224 aa).

5-phospho-alpha-D-ribose 1-diphosphate is bound by residues Lys-26, 73 to 74 (YK), Arg-100, Lys-101, Lys-104, His-106, and 127 to 135 (EDVTTSGKS). The orotate site is built by Thr-131 and Arg-160.

The protein belongs to the purine/pyrimidine phosphoribosyltransferase family. PyrE subfamily. Homodimer. Mg(2+) serves as cofactor.

It carries out the reaction orotidine 5'-phosphate + diphosphate = orotate + 5-phospho-alpha-D-ribose 1-diphosphate. It participates in pyrimidine metabolism; UMP biosynthesis via de novo pathway; UMP from orotate: step 1/2. Its function is as follows. Catalyzes the transfer of a ribosyl phosphate group from 5-phosphoribose 1-diphosphate to orotate, leading to the formation of orotidine monophosphate (OMP). The sequence is that of Orotate phosphoribosyltransferase from Clostridium botulinum (strain Alaska E43 / Type E3).